The primary structure comprises 97 residues: Co-chaperonin GroES (97 aa).

It belongs to the GroES chaperonin family. Heptamer of 7 subunits arranged in a ring. Interacts with the chaperonin GroEL.

The protein resides in the cytoplasm. In terms of biological role, together with the chaperonin GroEL, plays an essential role in assisting protein folding. The GroEL-GroES system forms a nano-cage that allows encapsulation of the non-native substrate proteins and provides a physical environment optimized to promote and accelerate protein folding. GroES binds to the apical surface of the GroEL ring, thereby capping the opening of the GroEL channel. The chain is Co-chaperonin GroES from Stenotrophomonas maltophilia (Pseudomonas maltophilia).